We begin with the raw amino-acid sequence, 626 residues long: METKQFKAESKRLLDLMINSIYTHKEIFLRELISNSSDAIDKIYYKTLTDDSLKFERDNYYIRVVSDKENRILKIADTGIGMTKEELENNLGVIAKSGSLQFKKENEVKEGYDIIGQFGVGFYSAFLVSDDVTVISKAFGSNEAYKWNSKGAEGYTIEPCEKETYGTEIILKIKDNTEEENYDEFLEEYTLKSIIKKYSDFIRYPIKMDLTKTKPKEDNKEEFEEYKEEETINSMVPIWRKNKNELKAEDYENFYAEKHYGFDKPIKYIHTSVDGVVSYNAILFIPETTPYDFYTKEYEKGLELYSSGVLIMNKCGDLLPDYFGFVKGIVDSEDLSLNISREILQHDRQLKLIAKNIKTKIKNELESLLKKERDKYEKFYESFGRQLKYGVYSDFGSNKDILQDLLMFYSSKEKKMVTLAEYVSRMPEDQKYIYYAVGESNERIEKLPQIEGVLDKGYEVLYFTDDIDEFAIKMLMSYKEKEFKSVSSGDLGIEGEEKENTSNSDDKENKELFESMKDMLSGKVKDVRASKRLKNHPVCLANEGELSIEMEKVLNAMPNNQNIKADKVLEININHDVFKSLKEAYEGDKEKLKLYTDLLYNQALLIEGLAINDPVEFTNNICKIMK.

The a; substrate-binding stretch occupies residues 1–341 (METKQFKAES…SEDLSLNISR (341 aa)). A b region spans residues 342–552 (EILQHDRQLK…EGELSIEMEK (211 aa)). Positions 490–509 (DLGIEGEEKENTSNSDDKEN) are disordered. A compositionally biased stretch (basic and acidic residues) spans 498-509 (KENTSNSDDKEN). Positions 553–626 (VLNAMPNNQN…FTNNICKIMK (74 aa)) are c.

This sequence belongs to the heat shock protein 90 family. Homodimer.

It localises to the cytoplasm. Molecular chaperone. Has ATPase activity. The polypeptide is Chaperone protein HtpG (Clostridium botulinum (strain ATCC 19397 / Type A)).